Reading from the N-terminus, the 202-residue chain is Snake venom metalloproteinase atroxlysin-1 (202 aa).

A Peptidase M12B domain is found at 6 to 202 (RYVDLFIVVD…ENPQCILNKR (197 aa)). The Ca(2+) site is built by D9 and D93. 3 cysteine pairs are disulfide-bonded: C117-C197, C157-C181, and C159-C164. Zn(2+) is bound at residue H142. The active site involves E143. The Zn(2+) site is built by H146 and H152. Residues C197 and N200 each contribute to the Ca(2+) site.

The protein belongs to the venom metalloproteinase (M12B) family. P-I subfamily. In terms of assembly, monomer. Requires Zn(2+) as cofactor. In terms of tissue distribution, expressed by the venom gland.

It localises to the secreted. Its activity is regulated as follows. Inhibited by EDTA, DTT and high concentrations of zinc ions (&gt;2 mM). Weakly inhibited by TLCK. Not inhibited by PMSF. Activated by calcium ions. Its function is as follows. Snake venom zinc metalloproteinase that acts on fibrinogen, fibrin, fibronectin (FN1), type I collagen, type IV collagen, integrin alpha-7/beta-1 (ITGA7/ITGB1) and integrin alpha-1/beta-1 (ITGA1/ITGB1). Binds to fibronectin (FN1), fibrinogen and, weakly, to type I collagen and laminin. Cleaves Xaa-Leu bonds. Inhibits ADP- and collagen-induced platelet aggregation both in the presence (IC(50)=1.4 uM for collagen) and in the absence (IC(50)=2.2 uM for collagen) of cofactors. Has hemorrhagic activity. This is Snake venom metalloproteinase atroxlysin-1 from Bothrops atrox (Barba amarilla).